A 184-amino-acid chain; its full sequence is Leucine-rich repeat-containing protein 20 (184 aa).

LRR repeat units lie at residues 51–72 (QIHL…FMTT), 75–96 (QLRE…VSAL), 98–120 (HLKA…TALP), 121–141 (ALET…EKLA), and 145–167 (ALRS…APPL). A Phosphoserine modification is found at Ser-175.

In Homo sapiens (Human), this protein is Leucine-rich repeat-containing protein 20 (LRRC20).